The following is a 154-amino-acid chain: Xanthine-guanine phosphoribosyltransferase (154 aa).

Residues 37 to 38, Arg69, and 88 to 96 each bind 5-phospho-alpha-D-ribose 1-diphosphate; these read RG and EDLVDSGDT. Arg69 is a binding site for GMP. A Mg(2+)-binding site is contributed by Asp89. Positions 92 and 135 each coordinate guanine. Residues Asp92 and Ile135 each contribute to the xanthine site. GMP is bound by residues 92–96 and 134–135; these read DSGDT and WI.

It belongs to the purine/pyrimidine phosphoribosyltransferase family. XGPT subfamily. Homotetramer. Mg(2+) is required as a cofactor.

It localises to the cell inner membrane. It carries out the reaction GMP + diphosphate = guanine + 5-phospho-alpha-D-ribose 1-diphosphate. The enzyme catalyses XMP + diphosphate = xanthine + 5-phospho-alpha-D-ribose 1-diphosphate. It catalyses the reaction IMP + diphosphate = hypoxanthine + 5-phospho-alpha-D-ribose 1-diphosphate. Its pathway is purine metabolism; GMP biosynthesis via salvage pathway; GMP from guanine: step 1/1. The protein operates within purine metabolism; XMP biosynthesis via salvage pathway; XMP from xanthine: step 1/1. Purine salvage pathway enzyme that catalyzes the transfer of the ribosyl-5-phosphate group from 5-phospho-alpha-D-ribose 1-diphosphate (PRPP) to the N9 position of the 6-oxopurines guanine and xanthine to form the corresponding ribonucleotides GMP (guanosine 5'-monophosphate) and XMP (xanthosine 5'-monophosphate), with the release of PPi. To a lesser extent, also acts on hypoxanthine. The polypeptide is Xanthine-guanine phosphoribosyltransferase (Vibrio atlanticus (strain LGP32) (Vibrio splendidus (strain Mel32))).